We begin with the raw amino-acid sequence, 342 residues long: L-lysine 2,3-aminomutase (342 aa).

In terms of domain architecture, Radical SAM core spans 106–329 (HKYQNRALLL…PRLAREIGGE (224 aa)). [4Fe-4S] cluster contacts are provided by Cys120, Cys124, and Cys127. N6-(pyridoxal phosphate)lysine is present on Lys332.

Belongs to the radical SAM superfamily. KamA family. [4Fe-4S] cluster serves as cofactor. It depends on pyridoxal 5'-phosphate as a cofactor.

The enzyme catalyses L-lysine = D-beta-lysine. Functionally, with EpmA is involved in the beta-lysylation step of the post-translational modification of translation elongation factor P (EF-P) on 'Lys-34'. EpmB appears to act before EpmA. Displays lysine 2,3-aminomutase activity, producing (R)-beta-lysine from (S)-alpha-lysine (L-lysine). This is L-lysine 2,3-aminomutase (epmB) from Salmonella typhimurium (strain LT2 / SGSC1412 / ATCC 700720).